Consider the following 257-residue polypeptide: UPF0246 protein Mpe_A2092 (257 aa).

This sequence belongs to the UPF0246 family.

This is UPF0246 protein Mpe_A2092 from Methylibium petroleiphilum (strain ATCC BAA-1232 / LMG 22953 / PM1).